Here is a 601-residue protein sequence, read N- to C-terminus: Probable N-acetylgalactosaminyltransferase 7 (601 aa).

Topologically, residues 1–20 (MIIARKKLQLQRLWRQRGCR) are cytoplasmic. Residues 21–38 (VATYICLGVLVLFGFVYN) traverse the membrane as a helical; Signal-anchor for type II membrane protein segment. The Lumenal portion of the chain corresponds to 39–601 (SKGNSMSSIK…FVWKEFYQSS (563 aa)). A disordered region spans residues 61–108 (DLTNKELPGGPDPNTIFRGSELGNYEPKEPEIPSNQPGEHGKPVPVTD). N-linked (GlcNAc...) asparagine glycosylation is present at asparagine 135. 5 disulfides stabilise this stretch: cysteine 146-cysteine 382, cysteine 373-cysteine 452, cysteine 490-cysteine 506, cysteine 529-cysteine 542, and cysteine 568-cysteine 583. Residues 155–265 (LPTVSVVVVF…TNWLPPLLAP (111 aa)) are catalytic subdomain A. Substrate contacts are provided by aspartate 196 and arginine 226. 2 residues coordinate Mn(2+): aspartate 249 and histidine 251. A catalytic subdomain B region spans residues 328–390 (PFRSPTHAGG…PCSHVGHVYR (63 aa)). Tryptophan 359 contacts substrate. Histidine 387 is a Mn(2+) binding site. Substrate is bound by residues arginine 390 and tyrosine 395. One can recognise a Ricin B-type lectin domain in the interval 477–595 (DVWGEARNPA…DNERQKFVWK (119 aa)).

This sequence belongs to the glycosyltransferase 2 family. GalNAc-T subfamily. It depends on Mn(2+) as a cofactor.

It is found in the golgi apparatus membrane. It functions in the pathway protein modification; protein glycosylation. Functionally, probable glycopeptide transferase involved in O-linked oligosaccharide biosynthesis. Glycopeptide transferases catalyze the transfer of an N-acetyl-D-galactosamine residue to an already glycosylated peptide. In contrast to other members of the family, it does not act as a peptide transferase that transfers GalNAc onto serine or threonine residue on peptides that have been tested. Some peptide transferase activity is however not excluded, considering that its appropriate peptide substrate may remain unidentified. This is Probable N-acetylgalactosaminyltransferase 7 (gly-7) from Caenorhabditis elegans.